Here is a 198-residue protein sequence, read N- to C-terminus: Nudix hydrolase 21, chloroplastic (198 aa).

Residues 1–37 (MISLFISNFSNLSNLSPTFDNMNMNIPSKKIVPVPTP) constitute a chloroplast transit peptide. The Nudix hydrolase domain maps to 59-191 (GYRQVVGCVP…WMREALEAFI (133 aa)). The short motif at 98-119 (GGWEIDESIEEAALRETIEEAG) is the Nudix box element. Mg(2+)-binding residues include Glu113 and Glu117.

Belongs to the Nudix hydrolase family. Mg(2+) is required as a cofactor. The cofactor is Mn(2+). Expressed in roots, leaves, stems and inflorescences.

Its subcellular location is the plastid. The protein localises to the chloroplast. Functionally, probably mediates the hydrolysis of some nucleoside diphosphate derivatives. This is Nudix hydrolase 21, chloroplastic (NUDT21) from Arabidopsis thaliana (Mouse-ear cress).